A 271-amino-acid polypeptide reads, in one-letter code: Protein PXR1 (271 aa).

Positions 25-72 constitute a G-patch domain; it reads TSRFGHQFLEKFGWKPGMGLGLYPMNSNTSHIKVSIKDDNVGLGAKLK. Residues 147 to 239 are disordered; it reads SNAKKRKREG…SASNIPDAVN (93 aa). Acidic residues predominate over residues 157–168; the sequence is DDSEDEDDDDKE. A compositionally biased stretch (basic residues) spans 175-203; it reads KKHKKHKKHKKDKKKDKKDKKEHKKHKKE. A compositionally biased stretch (basic and acidic residues) spans 204 to 221; the sequence is EKRLKKEKRAEKTKETKK. Serine 230 bears the Phosphoserine mark.

It belongs to the PINX1 family. In terms of assembly, interacts with EST2.

The protein resides in the nucleus. Its subcellular location is the nucleolus. Its function is as follows. Involved in rRNA-processing at A0, A1 and A2 sites through its action in U18 and U24 snoRNA 3'-end final trimming. Negative regulator of telomerase throughX competition for binding to EST2 with TLC1. The polypeptide is Protein PXR1 (PXR1) (Saccharomyces cerevisiae (strain YJM789) (Baker's yeast)).